Consider the following 891-residue polypeptide: MAPKQKKKTSRGKKRLKPVLAASEDMEPVNMESMGHPEIYPLVLTTKTQEIFNCRIDEDVTDEQPYKLINKEDIFEDLRNRAAVSDFHPVKKIVQEYPGNELLLVYDKDFKYGLNFYLIATEEGKENYLNPPEVPEEQEEYKEHIPEDVYIYKPPVSKPWVSLGSEKEIEEESVTESTKQITYMISRKRSEFGAPIKFSDQNASSVKDAYIECTAYPDKNFTLKQLEKDVGMQVIPQIKDISTQTKWTYPKNATTQYYPREFSEEEKETLKQSKPLVDFLNNASISVEIALQQNEIMNTFIDDWKYLAEEEGTFGDKTDTHLKEYQSFTDLHSPTEKMITCVSWHPTIYGLIAVSVAVRLSFEDRVHFSGKLLLQPSLILFWSFSDPIHPQLMLESPDDIFCFKFCPSDPNIIAGGCINGQIVMWDITAHADRIENIKAGGSRSKRATLKPMFLLEPESNKEAMYIRHCAVSSIENGHKKVITDIHWLSDTFEINRMGSVFENRSGICCQLVTCSADCTICFWDIRPQKPLTPQTTEKKKEESIEIPFDVPSTFLHLDLSWKPLTKVRLSKGETSLDHCPTKISLNEDHLLCKTQDKMLAQSKTEKAEEMNPYHNLESGMANLLKPIDDFCTKFFVGTEEGEVIYTDWKMEKDPETGRLMSKKPVSHHTIHDGTVHTIQRSPFYNDIILTVGGWNVAIWKEGVMTGPLLQSCCAPKRYTSGHWSLTRPGVFYIGREDGYIDIWDLLEKTHEPAQSQNICITMITYIKPWIFSSKQQFIATADYYGTLHILEIPWTLSRPSTNEMASVNHYFEREVKHLEYVEQRKKIREQEKKEMELEMAKKKVKTYQKSKEQMQAELKMDYESYLELEKTVLINLGLIKVTEKGSYMEVM.

Positions 1-17 are enriched in basic residues; it reads MAPKQKKKTSRGKKRLK. Residues 1-22 are disordered; the sequence is MAPKQKKKTSRGKKRLKPVLAA. 4 WD repeats span residues 395–435, 477–533, 670–709, and 713–753; these read ESPD…DRIE, GHKK…PLTP, IHDG…GPLL, and CAPK…HEPA. A coiled-coil region spans residues 818–861; that stretch reads LEYVEQRKKIREQEKKEMELEMAKKKVKTYQKSKEQMQAELKMD.

As to quaternary structure, interacts with ACTR2; this interaction reduces binding of the Arp2/3 complex to the VCA domain of nucleation promoting factors. Part of the multisubunit axonemal dynein complex formed at least of two heavy chains and a number of intermediate and light chains. Found in a associated with the catalytic heavy chain DNAH2, the intermediate chain DNAI4, and the light chain DYNLT1.

The protein localises to the cytoplasm. Its function is as follows. Acts as a negative regulator of cell migration, invasion, and metastasis downstream of p53/TP53, through inhibition of Arp2/3 complex-mediated actin polymerization. Via its association with the multisubunit axonemal dynein complex, is potentially involved in the regulation of cilia function. May play a role in osteogenesis of dental tissue-derived mesenchymal stem cells. This is Dynein axonemal intermediate chain 3 from Homo sapiens (Human).